The following is a 693-amino-acid chain: Golgin subfamily A member 6A (693 aa).

A coiled-coil region spans residues 14–611 (LEESRQNKLA…KLLELQELVL (598 aa)). 3 disordered regions span residues 20-69 (NKLA…PGDS), 497-547 (LPGE…GTEQ), and 661-693 (NVEPAPGAAREGSPHDNPTVQQIVQLSPVMQDT). Residues 54-69 (SPETTTSGGCHSPGDS) are compositionally biased toward polar residues. Over residues 537–547 (LPKEKADGTEQ) the composition is skewed to basic and acidic residues. Positions 676 to 693 (DNPTVQQIVQLSPVMQDT) are enriched in polar residues.

Belongs to the GOLGA6 family. Highly expressed in seminiferous tubes in testis. Highly expressed in spermatids, barely detectable in late pachytene spermatocytes, and not detectable in spermatogonia. Detected at intermediate levels in pancreas and lymph nodes, and at much lower levels in spleen, peripheral blood leukocytes, skeletal muscle, liver, lung, placenta, brain and heart.

This is Golgin subfamily A member 6A (GOLGA6A) from Homo sapiens (Human).